The chain runs to 258 residues: DNA repair protein RecO (258 aa).

It belongs to the RecO family.

Involved in DNA repair and RecF pathway recombination. This chain is DNA repair protein RecO, found in Syntrophotalea carbinolica (strain DSM 2380 / NBRC 103641 / GraBd1) (Pelobacter carbinolicus).